A 54-amino-acid polypeptide reads, in one-letter code: UPF0391 membrane protein BAB1_1670 (54 aa).

Transmembrane regions (helical) follow at residues 5–25 (VLVF…GIAG) and 29–48 (GIAQ…SLIA).

The protein belongs to the UPF0391 family.

It localises to the cell membrane. This Brucella abortus (strain 2308) protein is UPF0391 membrane protein BAB1_1670.